The sequence spans 89 residues: Protein FAM25A (89 aa).

It belongs to the FAM25 family.

The protein is Protein FAM25A of Mus musculus (Mouse).